A 90-amino-acid polypeptide reads, in one-letter code: Cell division topological specificity factor (90 aa).

This sequence belongs to the MinE family.

Functionally, prevents the cell division inhibition by proteins MinC and MinD at internal division sites while permitting inhibition at polar sites. This ensures cell division at the proper site by restricting the formation of a division septum at the midpoint of the long axis of the cell. This chain is Cell division topological specificity factor, found in Bordetella avium (strain 197N).